Consider the following 320-residue polypeptide: Serpentine receptor class delta-40 (320 aa).

7 helical membrane passes run I12 to I32, M42 to C62, Y95 to F115, I133 to I153, L189 to F209, A243 to T263, and F273 to V293.

This sequence belongs to the nematode receptor-like protein srd family.

It localises to the membrane. The polypeptide is Serpentine receptor class delta-40 (srd-40) (Caenorhabditis elegans).